Consider the following 157-residue polypeptide: Nucleoside diphosphate kinase (157 aa).

ATP contacts are provided by Lys-12, Phe-60, Arg-88, Thr-94, and Arg-105. The Pros-phosphohistidine intermediate role is filled by His-121.

It belongs to the NDK family. The cofactor is Mg(2+).

It localises to the cytoplasm. The enzyme catalyses a 2'-deoxyribonucleoside 5'-diphosphate + ATP = a 2'-deoxyribonucleoside 5'-triphosphate + ADP. It catalyses the reaction a ribonucleoside 5'-diphosphate + ATP = a ribonucleoside 5'-triphosphate + ADP. Its function is as follows. Major role in the synthesis of nucleoside triphosphates other than ATP. The ATP gamma phosphate is transferred to the NDP beta phosphate via a ping-pong mechanism, using a phosphorylated active-site intermediate. This chain is Nucleoside diphosphate kinase, found in Pyrococcus horikoshii (strain ATCC 700860 / DSM 12428 / JCM 9974 / NBRC 100139 / OT-3).